The chain runs to 371 residues: MEAMAPRTLLLLLAAALAPTQTRAGSHSLRYFYTAVSRPGLGEPRFIAVGYVDDTEFVRFDSDAENPRMEPRARWMEREGPEYWEQQTRIAKEWEQIYRVDLRTLRGYYNQSEGGSHTIQEMYGCDVGSDGSLLRGYRQDAYDGRDYIALNEDLKTWTAADFAAQITRNKWERARYAERLRAYLEGTCVEWLSRYLELGKETLLRSDPPEAHVTLHPRPEGDVTLRCWALGFYPADITLTWQLNGEDLTQDMELVETRPAGDGTFQKWASVVVPLGKEQNYTCRVEHEGLPKPLSQRWEPSPSTDSNMETTVIYVILGAVAMIGAVAIIGAMVAVVRRRKRNTGGKGGDYAPAPGRDSSQSSDVSLPDCKA.

The N-terminal stretch at 1–24 (MEAMAPRTLLLLLAAALAPTQTRA) is a signal peptide. Positions 25 to 114 (GSHSLRYFYT…LRGYYNQSEG (90 aa)) are alpha-1. At 25 to 311 (GSHSLRYFYT…PSTDSNMETT (287 aa)) the chain is on the extracellular side. The N-linked (GlcNAc...) asparagine glycan is linked to asparagine 110. Residues 115–206 (GSHTIQEMYG…ELGKETLLRS (92 aa)) form an alpha-2 region. The tract at residues 207–298 (DPPEAHVTLH…GLPKPLSQRW (92 aa)) is alpha-3. The region spanning 209-295 (PEAHVTLHPR…EHEGLPKPLS (87 aa)) is the Ig-like C1-type domain. A glycan (N-linked (GlcNAc...) asparagine) is linked at asparagine 280. Residues 299 to 311 (EPSPSTDSNMETT) form a connecting peptide region. The helical transmembrane segment at 312-336 (VIYVILGAVAMIGAVAIIGAMVAVV) threads the bilayer. Residues 337–371 (RRRKRNTGGKGGDYAPAPGRDSSQSSDVSLPDCKA) lie on the Cytoplasmic side of the membrane. The tract at residues 342-371 (NTGGKGGDYAPAPGRDSSQSSDVSLPDCKA) is disordered. 2 positions are modified to phosphoserine: serine 362 and serine 365.

This sequence belongs to the MHC class I family. As to quaternary structure, heterodimer of an alpha chain and a beta chain (beta-2-microglobulin).

Its subcellular location is the membrane. Involved in the presentation of foreign antigens to the immune system. The sequence is that of RT1 class I histocompatibility antigen, AA alpha chain from Rattus norvegicus (Rat).